Here is an 87-residue protein sequence, read N- to C-terminus: Phosphoribosyl-ATP pyrophosphatase (87 aa).

The protein belongs to the PRA-PH family.

Its subcellular location is the cytoplasm. The enzyme catalyses 1-(5-phospho-beta-D-ribosyl)-ATP + H2O = 1-(5-phospho-beta-D-ribosyl)-5'-AMP + diphosphate + H(+). It functions in the pathway amino-acid biosynthesis; L-histidine biosynthesis; L-histidine from 5-phospho-alpha-D-ribose 1-diphosphate: step 2/9. In Bifidobacterium animalis subsp. lactis (strain AD011), this protein is Phosphoribosyl-ATP pyrophosphatase.